The following is an 888-amino-acid chain: Microtubule-associated protein 10 (888 aa).

5 disordered regions span residues glutamate 398–glycine 454, serine 508–arginine 602, asparagine 620–valine 642, glutamine 654–cysteine 683, and threonine 699–serine 836. Positions leucine 524–proline 541 are enriched in polar residues. Residues glutamate 572 to threonine 589 show a composition bias toward basic and acidic residues. Residues valine 590–serine 600 are compositionally biased toward polar residues. Polar residues-rich tracts occupy residues alanine 661 to cysteine 683, threonine 699 to glycine 714, serine 722 to phenylalanine 745, glutamate 772 to threonine 786, and alanine 825 to serine 836.

As to quaternary structure, interacts (via middle region) with microtubules.

The protein localises to the cytoplasm. The protein resides in the cytoskeleton. It localises to the spindle pole. Its subcellular location is the microtubule organizing center. It is found in the centrosome. The protein localises to the midbody. In terms of biological role, microtubule-associated protein (MAP) that plays a role in the regulation of cell division; promotes microtubule stability and participates in the organization of the spindle midzone and normal progress of cytokinesis. In Rattus norvegicus (Rat), this protein is Microtubule-associated protein 10 (Map10).